Reading from the N-terminus, the 147-residue chain is UPF0306 protein YpAngola_A4021 (147 aa).

Belongs to the UPF0306 family.

The polypeptide is UPF0306 protein YpAngola_A4021 (Yersinia pestis bv. Antiqua (strain Angola)).